Here is a 328-residue protein sequence, read N- to C-terminus: CCAAT/enhancer-binding protein beta (328 aa).

The residue at position 3 (Arg3) is an Asymmetric dimethylarginine; by CARM1. Lys39 is subject to N6-methylated lysine. The disordered stretch occupies residues 165–274 (DSCKGPRKEE…NIAVRKSRDK (110 aa)). The span at 200 to 231 (SVPSGSSGNLSTSSSSSPPGTPNPSESSKSAA) shows a compositional bias: low complexity. Thr220 bears the Phosphothreonine; by RPS6KA1, CDK2 and MAPK mark. Residues 248–264 (KCVDKHSDEYKLRRERN) show a composition bias toward basic and acidic residues. The 64-residue stretch at 254–317 (SDEYKLRRER…STLRNLFKQL (64 aa)) folds into the bZIP domain. The segment at 258-278 (KLRRERNNIAVRKSRDKAKMR) is basic motif. Residues 280–287 (LETQHKVL) form a leucine-zipper region.

The protein belongs to the bZIP family. C/EBP subfamily. As to quaternary structure, binds DNA as a dimer. Interacts (not methylated) with MED23, MED26, SMARCA2, SMARCB1 and SMARCC1. Methylated. Methylation at Arg-3 by CARM1 and at Lys-39 by EHMT2, inhibit transactivation activity. Methylation is probably inhibited by phosphorylation at Thr-220. In terms of tissue distribution, specifically expressed in myelomoncytic cells.

The protein localises to the nucleus. Important transcriptional activator regulating the expression of genes involved in immune and inflammatory responses. Binds to regulatory regions of several acute-phase and cytokines genes and probably plays a role in the regulation of acute-phase reaction, inflammation and hemopoiesis. The consensus recognition site is 5'-T[TG]NNGNAA[TG]-3'. Functions in brown adipose tissue (BAT) differentiation. Regulates the transcriptional induction of peroxisome proliferator-activated receptor gamma (PPARG). Binds to the MGF and MIM-1 promoters and activates the transcription of these genes. Functionally, important transcription factor regulating the expression of genes involved in immune and inflammatory responses. Also plays a significant role in adipogenesis, as well as in the gluconeogenic pathway, liver regeneration, and hematopoiesis. The consensus recognition site is 5'-T[TG]NNGNAA[TG]-3'. Its functional capacity is governed by protein interactions and post-translational protein modifications. This is CCAAT/enhancer-binding protein beta (CEBPB) from Gallus gallus (Chicken).